We begin with the raw amino-acid sequence, 386 residues long: Glycerate dehydrogenase HPR, peroxisomal (386 aa).

NAD(+) contacts are provided by residues 175–176 (RI), 271–273 (CSR), and Asp-297. The active site involves Arg-273. Residue Glu-302 is part of the active site. His-320 acts as the Proton donor in catalysis. Position 320 to 323 (320 to 323 (HIAS)) interacts with NAD(+). Positions 384-386 (SKL) match the Microbody targeting signal motif.

This sequence belongs to the D-isomer specific 2-hydroxyacid dehydrogenase family. Present in leaves (at protein level). Mostly expressed in photosynthetic tissues such as leaves, stems, flowers, buds, and, to a lower extent, in siliques and roots.

Its subcellular location is the peroxisome. The catalysed reaction is (R)-glycerate + NAD(+) = 3-hydroxypyruvate + NADH + H(+). Its pathway is photosynthesis; photorespiration; 3-phospho-D-glycerate from glycine: step 3/4. Slightly inhibited by oxalate. Catalyzes the NADH-dependent reduction of hydroxypyruvate into glycerate in the photorespiratory core cycle. Mediates fatty acid beta-oxidation in germinating seeds when malate dehydrogenase is absent. The sequence is that of Glycerate dehydrogenase HPR, peroxisomal (HPR) from Arabidopsis thaliana (Mouse-ear cress).